A 267-amino-acid polypeptide reads, in one-letter code: Phosphate import ATP-binding protein PstB (267 aa).

The ABC transporter domain occupies 21 to 262 (VAARNLDFYY…PSKQQTEDYI (242 aa)). Residue 53 to 60 (GPSGCGKS) participates in ATP binding.

This sequence belongs to the ABC transporter superfamily. Phosphate importer (TC 3.A.1.7) family. In terms of assembly, the complex is composed of two ATP-binding proteins (PstB), two transmembrane proteins (PstC and PstA) and a solute-binding protein (PstS).

Its subcellular location is the cell inner membrane. It catalyses the reaction phosphate(out) + ATP + H2O = ADP + 2 phosphate(in) + H(+). Functionally, part of the ABC transporter complex PstSACB involved in phosphate import. Responsible for energy coupling to the transport system. The polypeptide is Phosphate import ATP-binding protein PstB (Xanthomonas campestris pv. campestris (strain 8004)).